Reading from the N-terminus, the 167-residue chain is Small ribosomal subunit protein uS5 (167 aa).

In terms of domain architecture, S5 DRBM spans 11-74 (LQEKLIAVNR…DKARRNMTTI (64 aa)).

Belongs to the universal ribosomal protein uS5 family. In terms of assembly, part of the 30S ribosomal subunit. Contacts proteins S4 and S8.

With S4 and S12 plays an important role in translational accuracy. In terms of biological role, located at the back of the 30S subunit body where it stabilizes the conformation of the head with respect to the body. This chain is Small ribosomal subunit protein uS5, found in Baumannia cicadellinicola subsp. Homalodisca coagulata.